A 911-amino-acid polypeptide reads, in one-letter code: DNA mismatch repair protein MutS (911 aa).

660 to 667 (GPNMAGKS) serves as a coordination point for ATP.

This sequence belongs to the DNA mismatch repair MutS family.

Its function is as follows. This protein is involved in the repair of mismatches in DNA. It is possible that it carries out the mismatch recognition step. This protein has a weak ATPase activity. This is DNA mismatch repair protein MutS from Rhodopseudomonas palustris (strain HaA2).